Here is a 158-residue protein sequence, read N- to C-terminus: 2-C-methyl-D-erythritol 2,4-cyclodiphosphate synthase (158 aa).

A divalent metal cation is bound by residues Asp9 and His11. Residues 9-11 (DVH) and 35-36 (HS) each bind 4-CDP-2-C-methyl-D-erythritol 2-phosphate. An a divalent metal cation-binding site is contributed by His43. 4-CDP-2-C-methyl-D-erythritol 2-phosphate contacts are provided by residues 57-59 (DIG) and Arg143.

The protein belongs to the IspF family. As to quaternary structure, homotrimer. It depends on a divalent metal cation as a cofactor.

It catalyses the reaction 4-CDP-2-C-methyl-D-erythritol 2-phosphate = 2-C-methyl-D-erythritol 2,4-cyclic diphosphate + CMP. Its pathway is isoprenoid biosynthesis; isopentenyl diphosphate biosynthesis via DXP pathway; isopentenyl diphosphate from 1-deoxy-D-xylulose 5-phosphate: step 4/6. In terms of biological role, involved in the biosynthesis of isopentenyl diphosphate (IPP) and dimethylallyl diphosphate (DMAPP), two major building blocks of isoprenoid compounds. Catalyzes the conversion of 4-diphosphocytidyl-2-C-methyl-D-erythritol 2-phosphate (CDP-ME2P) to 2-C-methyl-D-erythritol 2,4-cyclodiphosphate (ME-CPP) with a corresponding release of cytidine 5-monophosphate (CMP). This chain is 2-C-methyl-D-erythritol 2,4-cyclodiphosphate synthase, found in Chromobacterium violaceum (strain ATCC 12472 / DSM 30191 / JCM 1249 / CCUG 213 / NBRC 12614 / NCIMB 9131 / NCTC 9757 / MK).